The sequence spans 157 residues: Protein Smg (157 aa).

The protein belongs to the Smg family.

This Escherichia coli O139:H28 (strain E24377A / ETEC) protein is Protein Smg.